The primary structure comprises 69 residues: Large ribosomal subunit protein bL31 (69 aa).

Zn(2+) is bound by residues Cys-17, Cys-19, Cys-37, and Cys-40.

This sequence belongs to the bacterial ribosomal protein bL31 family. Type A subfamily. As to quaternary structure, part of the 50S ribosomal subunit. The cofactor is Zn(2+).

Its function is as follows. Binds the 23S rRNA. The chain is Large ribosomal subunit protein bL31 from Clostridium botulinum (strain Eklund 17B / Type B).